A 161-amino-acid polypeptide reads, in one-letter code: Zinc finger A20 and AN1 domain-containing stress-associated protein 9 (161 aa).

The A20-type zinc finger occupies 17 to 51 (PEAPILCVNNCGFFGSSMTNNMCSKCYRDFVKVTT). Cys-23, Cys-27, Cys-39, and Cys-42 together coordinate Zn(2+). Positions 62–99 (FTPASSSKTPLEPAKPDEVPAAAVEDKQAAQEPPKPPS) are disordered. A compositionally biased stretch (basic and acidic residues) spans 75-90 (AKPDEVPAAAVEDKQA). The AN1-type zinc finger occupies 96–142 (KPPSNRCLSCRKKVGLTGFQCRCGGTFCSTHRYTEAHDCTFDYKKAG). 8 residues coordinate Zn(2+): Cys-102, Cys-105, Cys-116, Cys-118, Cys-123, His-126, His-132, and Cys-134.

May be involved in environmental stress response. The sequence is that of Zinc finger A20 and AN1 domain-containing stress-associated protein 9 (SAP9) from Oryza sativa subsp. japonica (Rice).